The primary structure comprises 430 residues: Trigger factor (430 aa).

Residues 163 to 248 (GDVVDVDYKG…LNSIKTSILP (86 aa)) enclose the PPIase FKBP-type domain.

The protein belongs to the FKBP-type PPIase family. Tig subfamily.

It localises to the cytoplasm. The enzyme catalyses [protein]-peptidylproline (omega=180) = [protein]-peptidylproline (omega=0). Its function is as follows. Involved in protein export. Acts as a chaperone by maintaining the newly synthesized protein in an open conformation. Functions as a peptidyl-prolyl cis-trans isomerase. The sequence is that of Trigger factor from Lawsonia intracellularis (strain PHE/MN1-00).